Here is a 206-residue protein sequence, read N- to C-terminus: Adenylate kinase (206 aa).

10–15 contacts ATP; that stretch reads GAGKGT. Residues 30–59 are NMP; that stretch reads STGDMLRAAVAAGTPVGLKAKDIMASGGLV. AMP-binding positions include T31, R36, 57-59, 85-88, and Q92; these read GLV and GFPR. The tract at residues 126–142 is LID; that stretch reads NRVAETTARGEQVRADD. Residue R127 participates in ATP binding. The AMP site is built by R139 and R150. M178 provides a ligand contact to ATP.

The protein belongs to the adenylate kinase family. As to quaternary structure, monomer.

The protein localises to the cytoplasm. The catalysed reaction is AMP + ATP = 2 ADP. It participates in purine metabolism; AMP biosynthesis via salvage pathway; AMP from ADP: step 1/1. Its function is as follows. Catalyzes the reversible transfer of the terminal phosphate group between ATP and AMP. Plays an important role in cellular energy homeostasis and in adenine nucleotide metabolism. The polypeptide is Adenylate kinase (Nitrobacter winogradskyi (strain ATCC 25391 / DSM 10237 / CIP 104748 / NCIMB 11846 / Nb-255)).